Consider the following 225-residue polypeptide: Cbp/p300-interacting transactivator 2 (225 aa).

The protein belongs to the CITED family.

The protein resides in the nucleus. In terms of biological role, transcriptional coactivator or corepressor of the p300/CBP-mediated transcription complex. May be involved in sex determination, early gonad development, left-right patterning during embryogenesis and differentiation of the adrenal cortex. In Xenopus tropicalis (Western clawed frog), this protein is Cbp/p300-interacting transactivator 2 (cited2).